Reading from the N-terminus, the 563-residue chain is Delta-1-pyrroline-5-carboxylate dehydrogenase, mitochondrial (563 aa).

The N-terminal 24 residues, 1–24 (MLLRSAALCRALLARRGRAAGLCR), are a transit peptide targeting the mitochondrion. At Ser44 the chain carries Phosphoserine. The residue at position 52 (Lys52) is an N6-acetyllysine. An N6-acetyllysine; alternate mark is found at Lys93, Lys99, Lys114, Lys130, and Lys175. Residues Lys93, Lys99, Lys114, Lys130, and Lys175 each carry the N6-succinyllysine; alternate modification. NAD(+)-binding positions include Ser208, Lys233, and 286-290 (GSVPT). Glu314 functions as the Proton acceptor in the catalytic mechanism. Residue Lys318 is modified to N6-acetyllysine. At Lys347 the chain carries N6-succinyllysine. Residue Cys348 is the Nucleophile of the active site. An N6-acetyllysine mark is found at Lys365 and Lys376. At Lys395 the chain carries N6-succinyllysine. NAD(+) is bound at residue Glu447. Lys509 bears the N6-acetyllysine; alternate mark. Lys509 is modified (N6-succinyllysine; alternate). Ser513 is a substrate binding site. At Lys531 the chain carries N6-acetyllysine.

This sequence belongs to the aldehyde dehydrogenase family. In terms of assembly, homodimer.

Its subcellular location is the mitochondrion matrix. The catalysed reaction is L-glutamate 5-semialdehyde + NAD(+) + H2O = L-glutamate + NADH + 2 H(+). Its pathway is amino-acid degradation; L-proline degradation into L-glutamate; L-glutamate from L-proline: step 2/2. Functionally, irreversible conversion of delta-1-pyrroline-5-carboxylate (P5C), derived either from proline or ornithine, to glutamate. This is a necessary step in the pathway interconnecting the urea and tricarboxylic acid cycles. The preferred substrate is glutamic gamma-semialdehyde, other substrates include succinic, glutaric and adipic semialdehydes. The protein is Delta-1-pyrroline-5-carboxylate dehydrogenase, mitochondrial (ALDH4A1) of Bos taurus (Bovine).